A 114-amino-acid chain; its full sequence is Transmembrane protein 256 (114 aa).

An N-terminal signal peptide occupies residues 1-25 (MNAASLVQRVAGISGALAVAAGAYG). The Extracellular portion of the chain corresponds to 26 to 64 (AHGFRRSEASDYQRELFDTANKYHFYHSLALLGAARCRK). A helical membrane pass occupies residues 65–85 (PALAGVILLTGMGCFCGPLYH). Residues 86-93 (QPLTNDPS) lie on the Cytoplasmic side of the membrane. A helical membrane pass occupies residues 94–114 (FSKLAPIGGSLLIVGWAAMAL).

This sequence belongs to the TMEM256 family.

The protein resides in the membrane. The polypeptide is Transmembrane protein 256 (tmem256) (Danio rerio (Zebrafish)).